We begin with the raw amino-acid sequence, 134 residues long: Phospholipase A2 (134 aa).

Ca(2+)-binding residues include Trp-8, Gly-10, and Gly-12. 5 cysteine pairs are disulfide-bonded: Cys-9-Cys-31, Cys-30-Cys-70, Cys-37-Cys-63, Cys-61-Cys-95, and Cys-105-Cys-113. Asn-13 is a glycosylation site (N-linked (GlcNAc...) asparagine). His-34 is a catalytic residue. Asp-35 provides a ligand contact to Ca(2+). Residue Asp-64 is part of the active site.

This sequence belongs to the phospholipase A2 family. Group III subfamily. The cofactor is Ca(2+). As to expression, expressed by the venom gland.

The protein resides in the secreted. It catalyses the reaction a 1,2-diacyl-sn-glycero-3-phosphocholine + H2O = a 1-acyl-sn-glycero-3-phosphocholine + a fatty acid + H(+). Its function is as follows. PLA2 catalyzes the calcium-dependent hydrolysis of the 2-acyl groups in 3-sn-phosphoglycerides. The protein is Phospholipase A2 of Apis cerana cerana (Oriental honeybee).